Here is a 281-residue protein sequence, read N- to C-terminus: Pantothenate synthetase (281 aa).

30–37 (MGYLHEGH) contributes to the ATP binding site. His-37 (proton donor) is an active-site residue. A (R)-pantoate-binding site is contributed by Gln-61. Gln-61 is a beta-alanine binding site. 147–150 (GEKD) provides a ligand contact to ATP. Gln-153 provides a ligand contact to (R)-pantoate. ATP is bound by residues Ile-176 and 184–187 (KSSR).

Belongs to the pantothenate synthetase family. Homodimer.

It is found in the cytoplasm. The enzyme catalyses (R)-pantoate + beta-alanine + ATP = (R)-pantothenate + AMP + diphosphate + H(+). It participates in cofactor biosynthesis; (R)-pantothenate biosynthesis; (R)-pantothenate from (R)-pantoate and beta-alanine: step 1/1. Its function is as follows. Catalyzes the condensation of pantoate with beta-alanine in an ATP-dependent reaction via a pantoyl-adenylate intermediate. This is Pantothenate synthetase from Clostridium botulinum (strain Loch Maree / Type A3).